A 92-amino-acid polypeptide reads, in one-letter code: uncharacterized protein (92 aa).

Residues 25-53 (AGRGVRREARDTPCRGTAEGLATSQPEDG) are disordered.

This is an uncharacterized protein from Treponema pallidum (strain Nichols).